The following is a 274-amino-acid chain: 3-methyl-2-oxobutanoate hydroxymethyltransferase (274 aa).

Mg(2+) is bound by residues Asp-49 and Asp-88. 3-methyl-2-oxobutanoate-binding positions include 49–50 (DS), Asp-88, and Lys-118. Glu-120 is a Mg(2+) binding site. Glu-187 serves as the catalytic Proton acceptor.

Belongs to the PanB family. As to quaternary structure, homodecamer; pentamer of dimers. The cofactor is Mg(2+).

It is found in the cytoplasm. It catalyses the reaction 3-methyl-2-oxobutanoate + (6R)-5,10-methylene-5,6,7,8-tetrahydrofolate + H2O = 2-dehydropantoate + (6S)-5,6,7,8-tetrahydrofolate. Its pathway is cofactor biosynthesis; (R)-pantothenate biosynthesis; (R)-pantoate from 3-methyl-2-oxobutanoate: step 1/2. Its function is as follows. Catalyzes the reversible reaction in which hydroxymethyl group from 5,10-methylenetetrahydrofolate is transferred onto alpha-ketoisovalerate to form ketopantoate. The chain is 3-methyl-2-oxobutanoate hydroxymethyltransferase from Rhodopseudomonas palustris (strain TIE-1).